Here is a 158-residue protein sequence, read N- to C-terminus: SsrA-binding protein (158 aa).

Residues lysine 133–glutamate 152 show a composition bias toward basic and acidic residues. Positions lysine 133–glycine 158 are disordered.

The protein belongs to the SmpB family.

It is found in the cytoplasm. In terms of biological role, required for rescue of stalled ribosomes mediated by trans-translation. Binds to transfer-messenger RNA (tmRNA), required for stable association of tmRNA with ribosomes. tmRNA and SmpB together mimic tRNA shape, replacing the anticodon stem-loop with SmpB. tmRNA is encoded by the ssrA gene; the 2 termini fold to resemble tRNA(Ala) and it encodes a 'tag peptide', a short internal open reading frame. During trans-translation Ala-aminoacylated tmRNA acts like a tRNA, entering the A-site of stalled ribosomes, displacing the stalled mRNA. The ribosome then switches to translate the ORF on the tmRNA; the nascent peptide is terminated with the 'tag peptide' encoded by the tmRNA and targeted for degradation. The ribosome is freed to recommence translation, which seems to be the essential function of trans-translation. In Pseudarthrobacter chlorophenolicus (strain ATCC 700700 / DSM 12829 / CIP 107037 / JCM 12360 / KCTC 9906 / NCIMB 13794 / A6) (Arthrobacter chlorophenolicus), this protein is SsrA-binding protein.